A 398-amino-acid polypeptide reads, in one-letter code: Acetate kinase (398 aa).

Asn-8 lines the Mg(2+) pocket. Lys-15 is a binding site for ATP. Arg-90 is a binding site for substrate. The active-site Proton donor/acceptor is the Asp-147. ATP contacts are provided by residues 207-211, 282-284, and 330-334; these read HIGAG, DMR, and GVGEN. Glu-383 contacts Mg(2+).

It belongs to the acetokinase family. In terms of assembly, homodimer. Mg(2+) serves as cofactor. Requires Mn(2+) as cofactor.

It localises to the cytoplasm. It carries out the reaction acetate + ATP = acetyl phosphate + ADP. Its pathway is metabolic intermediate biosynthesis; acetyl-CoA biosynthesis; acetyl-CoA from acetate: step 1/2. In terms of biological role, catalyzes the formation of acetyl phosphate from acetate and ATP. Can also catalyze the reverse reaction. This Limosilactobacillus fermentum (strain NBRC 3956 / LMG 18251) (Lactobacillus fermentum) protein is Acetate kinase.